We begin with the raw amino-acid sequence, 207 residues long: Cytochrome c biogenesis ATP-binding export protein CcmA (207 aa).

Residues 4–207 (LEARELLCER…RISLTQTGAA (204 aa)) enclose the ABC transporter domain. 36 to 43 (GSNGAGKT) lines the ATP pocket.

It belongs to the ABC transporter superfamily. CcmA exporter (TC 3.A.1.107) family. As to quaternary structure, the complex is composed of two ATP-binding proteins (CcmA) and two transmembrane proteins (CcmB).

The protein resides in the cell inner membrane. The catalysed reaction is heme b(in) + ATP + H2O = heme b(out) + ADP + phosphate + H(+). Functionally, part of the ABC transporter complex CcmAB involved in the biogenesis of c-type cytochromes; once thought to export heme, this seems not to be the case, but its exact role is uncertain. Responsible for energy coupling to the transport system. This is Cytochrome c biogenesis ATP-binding export protein CcmA from Escherichia coli O6:H1 (strain CFT073 / ATCC 700928 / UPEC).